A 107-amino-acid chain; its full sequence is Disintegrin lebestatin (107 aa).

Residues 1–20 (MIQVLLVIICLAVFPFQGSS) form the signal peptide. Residues 21 to 64 (KTLKSGNVNDYEVVNPGTVTGLPKGAVEEKHEPMKGNTLQKFPL) constitute a propeptide that is removed on maturation. Intrachain disulfides connect Cys-65–Cys-74, Cys-70–Cys-93, Cys-71–Cys-98, and Cys-83–Cys-100. Residues 65–105 (CTTGPCCRQCKLKPAGTTCWKTSRTSHYCTGKSCDCPSYPG) form the Disintegrin domain. Positions 85-87 (KTS) match the Cell attachment site; atypical (KTS) motif. Positions 106-107 (NG) are excised as a propeptide.

In terms of assembly, monomer. Expressed by the venom gland.

The protein localises to the secreted. In terms of biological role, specifically interacts with the alpha-1/beta-1 integrin (ITGA1/ITGB1). Exhibits highly inhibitory effects on cell adhesion and cell migration to collagens I and IV. Also shows in vivo anti-angiogenic activity. The sequence is that of Disintegrin lebestatin from Macrovipera lebetinus (Levantine viper).